A 150-amino-acid polypeptide reads, in one-letter code: Large ribosomal subunit protein uL13 (150 aa).

The protein belongs to the universal ribosomal protein uL13 family. As to quaternary structure, part of the 50S ribosomal subunit.

Functionally, this protein is one of the early assembly proteins of the 50S ribosomal subunit, although it is not seen to bind rRNA by itself. It is important during the early stages of 50S assembly. In Persephonella marina (strain DSM 14350 / EX-H1), this protein is Large ribosomal subunit protein uL13.